A 540-amino-acid polypeptide reads, in one-letter code: Cytochrome bc1 complex cytochrome b subunit (540 aa).

The helical transmembrane segment at 40 to 60 (EIALYSFIILLLTGVYLTLFF) threads the bilayer. Heme-binding residues include His-105 and His-119. 3 consecutive transmembrane segments (helical) span residues 109–129 (ALTF…TGAF), 137–157 (WIIG…GYSL), and 169–189 (IMSA…WLIF). Positions 206 and 221 each coordinate heme. 5 helical membrane passes run 207–227 (VLII…LVWY), 259–279 (FGLV…INAI), 325–345 (AFWV…YPFI), 371–391 (LGVM…NDLF), and 408–428 (IGLI…CLGL).

It belongs to the cytochrome b family. In terms of assembly, the cytochrome bc1 complex is composed of a cytochrome b (QcrB), the Rieske protein iron-sulfur (QcrA) and a diheme cytochrome c (QcrC) subunit. It depends on heme as a cofactor.

The protein resides in the cell membrane. The catalysed reaction is a quinol + 2 Fe(III)-[cytochrome c](out) = a quinone + 2 Fe(II)-[cytochrome c](out) + 2 H(+)(out). Cytochrome b subunit of the cytochrome bc1 complex, an essential component of the respiratory electron transport chain required for ATP synthesis. The bc1 complex catalyzes the oxidation of menaquinol and the reduction of cytochrome c in the respiratory chain. The bc1 complex operates through a Q-cycle mechanism that couples electron transfer to generation of the proton gradient that drives ATP synthesis. The sequence is that of Cytochrome bc1 complex cytochrome b subunit (qcrB) from Corynebacterium diphtheriae (strain ATCC 700971 / NCTC 13129 / Biotype gravis).